The primary structure comprises 733 residues: Methionine--tRNA ligase (733 aa).

Positions 11 to 21 match the 'HIGH' region motif; it reads PYANGPIHAGH. Positions 143, 146, 156, and 159 each coordinate Zn(2+). The 'KMSKS' region signature appears at 345–349; the sequence is KFSTS. Thr-348 contributes to the ATP binding site. A tRNA-binding domain is found at 633 to 733; it reads DFMKLDLRVG…KEVKLGARIR (101 aa).

This sequence belongs to the class-I aminoacyl-tRNA synthetase family. MetG type 1 subfamily. Homodimer. The cofactor is Zn(2+).

Its subcellular location is the cytoplasm. The enzyme catalyses tRNA(Met) + L-methionine + ATP = L-methionyl-tRNA(Met) + AMP + diphosphate. Its function is as follows. Is required not only for elongation of protein synthesis but also for the initiation of all mRNA translation through initiator tRNA(fMet) aminoacylation. The sequence is that of Methionine--tRNA ligase from Thermococcus onnurineus (strain NA1).